Here is a 119-residue protein sequence, read N- to C-terminus: Holo-[acyl-carrier-protein] synthase (119 aa).

Mg(2+)-binding residues include D8 and E50.

The protein belongs to the P-Pant transferase superfamily. AcpS family. The cofactor is Mg(2+).

Its subcellular location is the cytoplasm. It carries out the reaction apo-[ACP] + CoA = holo-[ACP] + adenosine 3',5'-bisphosphate + H(+). Functionally, transfers the 4'-phosphopantetheine moiety from coenzyme A to a Ser of acyl-carrier-protein. The polypeptide is Holo-[acyl-carrier-protein] synthase (Clavibacter michiganensis subsp. michiganensis (strain NCPPB 382)).